A 52-amino-acid polypeptide reads, in one-letter code: DNA import protein CedA2 (52 aa).

The next 2 helical transmembrane spans lie at 1–21 (MKSY…VYIY) and 27–47 (ILVS…IIFE).

Forms a complex composed of CedA, CedA1 and CedA2.

The protein resides in the cell membrane. Functionally, part of the Ced system, which is involved in DNA import. This chain is DNA import protein CedA2, found in Sulfolobus acidocaldarius (strain ATCC 33909 / DSM 639 / JCM 8929 / NBRC 15157 / NCIMB 11770).